The sequence spans 146 residues: Aminoglycoside N(6')-acetyltransferase type 1 (146 aa).

Residues 1-146 (MNIMPVSESL…RVVYFKKHIG (146 aa)) form the N-acetyltransferase domain. The substrate site is built by tryptophan 22, histidine 25, tyrosine 66, and glutamate 79. 81–83 (IYV) is a binding site for acetyl-CoA. Aspartate 115 is a binding site for substrate. An acetyl-CoA-binding site is contributed by asparagine 120. Residue glutamate 136 participates in substrate binding.

As to quaternary structure, homodimer.

The enzyme catalyses kanamycin B + acetyl-CoA = N(6')-acetylkanamycin B + CoA + H(+). Its function is as follows. Catalyzes the transfer of an acetyl group from acetyl-CoA to the 6'-amino group of aminoglycoside molecules conferring resistance to antibiotics containing the purpurosamine ring including amikacin, kanamycin, tobramycin and netilmicin. This Acinetobacter genomosp. 13 protein is Aminoglycoside N(6')-acetyltransferase type 1.